A 568-amino-acid chain; its full sequence is TWiK family of potassium channels protein 9 (568 aa).

Topologically, residues 1 to 15 are cytoplasmic; it reads MKCSFHIPEKYQWAS. A helical membrane pass occupies residues 16-36; it reads TLFVHVALIAGVAVYTVFGAL. Positions 163 to 183 form an intramembrane region, pore-forming; it reads IGNSVIFAFTVITTIGYGHVA. The helical transmembrane segment at 191-211 threads the bilayer; that stretch reads LFLIFYGVIGVPFTLLTIADL. The Cytoplasmic segment spans residues 212 to 316; sequence GMFLTRFLKN…NNEPRKTEES (105 aa). 2 disordered regions span residues 243–262 and 274–314; these read QRNK…RSEV and MRTA…RKTE. The segment covering 297–307 has biased composition (acidic residues); the sequence is GKEEDEEEPEN. The chain crosses the membrane as a helical span at residues 317 to 337; the sequence is IALGITFTCYLVAGAKILSVY. The pore-forming intramembrane region spans 343-363; that stretch reads FFKALYFNFVTLTTIGLGDFV. A helical transmembrane segment spans residues 370-390; that stretch reads LLITLIYIGIGLALTTMAIEI. The Cytoplasmic portion of the chain corresponds to 391–568; the sequence is AADLLKKLHY…LRTYTNARRK (178 aa).

It belongs to the two pore domain potassium channel (TC 1.A.1.8) family. Expressed in ray A-type neurons and cell bodies. Also seen in head, pharyngeal and phasmid neurons, and in coelomocytes.

Its subcellular location is the membrane. Its function is as follows. Potassium channel protein that may be component of regulatory network that controls ray development and function. The polypeptide is TWiK family of potassium channels protein 9 (twk-9) (Caenorhabditis elegans).